The following is a 237-amino-acid chain: Phosphoserine phosphatase (237 aa).

Catalysis depends on aspartate 30, which acts as the Nucleophile. 2 residues coordinate Mg(2+): aspartate 30 and aspartate 32. Aspartate 32 acts as the Proton donor in catalysis. Residues glutamate 39, arginine 76, 120-121, and lysine 169 each bind substrate; that span reads SG. Residue aspartate 192 coordinates Mg(2+). Asparagine 195 serves as a coordination point for substrate.

The protein belongs to the HAD-like hydrolase superfamily. SerB family. Mg(2+) is required as a cofactor.

It carries out the reaction O-phospho-L-serine + H2O = L-serine + phosphate. The catalysed reaction is O-phospho-D-serine + H2O = D-serine + phosphate. It functions in the pathway amino-acid biosynthesis; L-serine biosynthesis; L-serine from 3-phospho-D-glycerate: step 3/3. In terms of biological role, catalyzes the dephosphorylation of phosphoserine (P-Ser) in vitro. Also catalyzes the dephosphorylation of phosphothreonine (P-Thr) in vitro. This chain is Phosphoserine phosphatase, found in Albidiferax ferrireducens (strain ATCC BAA-621 / DSM 15236 / T118) (Rhodoferax ferrireducens).